The primary structure comprises 371 residues: Cytochrome b (371 aa).

A run of 4 helical transmembrane segments spans residues 25–45 (FGSM…FLAI), 69–90 (WIMQ…YTHI), 105–125 (WLSG…GYVL), and 170–190 (FFAL…IHII). Heme b is bound by residues H75 and H89. Heme b is bound by residues H174 and H188. H193 lines the a ubiquinone pocket. 4 helical membrane passes run 218–238 (YKDT…LSFT), 280–300 (LGGT…PFTH), 312–332 (LAQT…WTAS), and 339–358 (FIII…IMNP).

The protein belongs to the cytochrome b family. As to quaternary structure, the cytochrome bc1 complex contains 3 respiratory subunits (MT-CYB, CYC1 and UQCRFS1), 2 core proteins (UQCRC1 and UQCRC2) and probably 6 low-molecular weight proteins. It depends on heme b as a cofactor.

The protein localises to the mitochondrion inner membrane. Its function is as follows. Component of the ubiquinol-cytochrome c reductase complex (complex III or cytochrome b-c1 complex) that is part of the mitochondrial respiratory chain. The b-c1 complex mediates electron transfer from ubiquinol to cytochrome c. Contributes to the generation of a proton gradient across the mitochondrial membrane that is then used for ATP synthesis. In Sinomicrurus macclellandi (Macclelland's coral snake), this protein is Cytochrome b (MT-CYB).